Reading from the N-terminus, the 368-residue chain is MIKKTILNDTHRALGAKMVDFSGWEMPIHYGSQIDEHHHVRRNAGIFDVSHMTVIDLHGTQVRPLLRRLLANSVDKLKVPGKALYSCMLNPQGGVIDDLIVYYLREDYFRFIVNAATREKDLAWINTQASAFNVRVEERADLAMLAVQGPAARAQVTNLLAETHRDAVEKLGRFAALEVASHSKKILFISRTGYTGEDGFEILLPQEETITLWNALLKTGVKPIGLGARDTLRLEAGMNLYGQDMDEQVSPYEAALGWTVMLDEGRNFIGRNVLEQQKTNGVSRQMIGLLMDEKGVLRHGQKVLTAQGEGHILSGTFSPTLNKAIGFARVPAGKPSEVRVNIRDREIPVRVVRFPFVREGQTQPNIFD.

It belongs to the GcvT family. The glycine cleavage system is composed of four proteins: P, T, L and H.

The enzyme catalyses N(6)-[(R)-S(8)-aminomethyldihydrolipoyl]-L-lysyl-[protein] + (6S)-5,6,7,8-tetrahydrofolate = N(6)-[(R)-dihydrolipoyl]-L-lysyl-[protein] + (6R)-5,10-methylene-5,6,7,8-tetrahydrofolate + NH4(+). The glycine cleavage system catalyzes the degradation of glycine. In Xylella fastidiosa (strain 9a5c), this protein is Aminomethyltransferase.